The primary structure comprises 185 residues: Small ribosomal subunit protein uS5c (185 aa).

The S5 DRBM domain occupies 26–89 (FVERLIKISR…ADGRKNLIKI (64 aa)).

The protein belongs to the universal ribosomal protein uS5 family. In terms of assembly, part of the 30S ribosomal subunit. Contacts protein S4.

The protein localises to the plastid. Its subcellular location is the chloroplast. Its function is as follows. With S4 and S12 plays an important role in translational accuracy. This Trieres chinensis (Marine centric diatom) protein is Small ribosomal subunit protein uS5c (rps5).